Consider the following 495-residue polypeptide: NADP/NAD-dependent aldehyde dehydrogenase PuuC (495 aa).

NAD(+) is bound at residue 244-249; it reads GSTRTG. Residues Glu267 and Cys302 contribute to the active site.

The protein belongs to the aldehyde dehydrogenase family.

The catalysed reaction is an aldehyde + NADP(+) + H2O = a carboxylate + NADPH + 2 H(+). The enzyme catalyses an aldehyde + NAD(+) + H2O = a carboxylate + NADH + 2 H(+). It carries out the reaction 4-(gamma-L-glutamylamino)butanal + NADP(+) + H2O = 4-(gamma-L-glutamylamino)butanoate + NADPH + 2 H(+). It catalyses the reaction 4-(gamma-L-glutamylamino)butanal + NAD(+) + H2O = 4-(gamma-L-glutamylamino)butanoate + NADH + 2 H(+). The protein operates within amine and polyamine degradation; putrescine degradation; 4-aminobutanoate from putrescine: step 3/4. With respect to regulation, lithium ions exhibits the highest inhibition (97%). To a lesser extent (5-20%), potassium, sodium, and ammonium ions also inhibit PuuC activity. Transition metals, such as copper and zinc ions inhibit PuuC activity by more than 90%. The presence of heavy metals (mercury, silver) or sodium hydrogensulfite in the reaction mixture completely inactivate PuuC; in contrast, disulfide reductants such as DTT and 2-mercaptoethanol significantly increase its activity by 75% and 27%, respectively. Catalyzes the oxidation of 3-hydroxypropionaldehyde (3-HPA) to 3-hydroxypropionic acid (3-HP). It acts preferentially with NAD but can also use NADP. 3-HPA appears to be the most suitable substrate for PuuC followed by isovaleraldehyde, propionaldehyde, butyraldehyde, and valeraldehyde. It might play a role in propionate and/or acetic acid metabolisms. Also involved in the breakdown of putrescine through the oxidation of gamma-Glu-gamma-aminobutyraldehyde to gamma-Glu-gamma-aminobutyrate (gamma-Glu-GABA). This is NADP/NAD-dependent aldehyde dehydrogenase PuuC from Escherichia coli (strain K12).